Reading from the N-terminus, the 432-residue chain is 3-phosphoshikimate 1-carboxyvinyltransferase (432 aa).

Lys22, Ser23, and Arg27 together coordinate 3-phosphoshikimate. Residue Lys22 participates in phosphoenolpyruvate binding. The phosphoenolpyruvate site is built by Gly96 and Arg127. Residues Ser173, Ser174, Gln175, Ser201, Asp316, Asn339, and Lys343 each contribute to the 3-phosphoshikimate site. Gln175 is a phosphoenolpyruvate binding site. The active-site Proton acceptor is the Asp316. Phosphoenolpyruvate contacts are provided by Arg347, Arg391, and Lys416.

It belongs to the EPSP synthase family. Monomer.

The protein localises to the cytoplasm. It catalyses the reaction 3-phosphoshikimate + phosphoenolpyruvate = 5-O-(1-carboxyvinyl)-3-phosphoshikimate + phosphate. It participates in metabolic intermediate biosynthesis; chorismate biosynthesis; chorismate from D-erythrose 4-phosphate and phosphoenolpyruvate: step 6/7. Its function is as follows. Catalyzes the transfer of the enolpyruvyl moiety of phosphoenolpyruvate (PEP) to the 5-hydroxyl of shikimate-3-phosphate (S3P) to produce enolpyruvyl shikimate-3-phosphate and inorganic phosphate. The protein is 3-phosphoshikimate 1-carboxyvinyltransferase of Haemophilus influenzae (strain ATCC 51907 / DSM 11121 / KW20 / Rd).